Consider the following 233-residue polypeptide: MKAICVLSGGLDSAVTSLVAKSENYDITTVTFNYGQMALNQEIKSAKKISEILNADNHVIDINFVKKFSKSGLNTGNIPEPEKEDLDDFEKSEKTMKAVWVPARNMIMFSIASGFAEGIDAEKIFSGLNKEEGVTFPDNTPEFIERFNKSLEYGTLNKVKMVAPLYKLNKPEIAKLGKELELKLDLEVIKYSYSCYRDNREDYLHCGTCESCMRRKRAFKEAGIVDPTKYLVE.

7–17 (LSGGLDSAVTS) contributes to the ATP binding site. Cys-195, Cys-206, Cys-209, and Cys-212 together coordinate Zn(2+).

The protein belongs to the QueC family. Requires Zn(2+) as cofactor.

The enzyme catalyses 7-carboxy-7-deazaguanine + NH4(+) + ATP = 7-cyano-7-deazaguanine + ADP + phosphate + H2O + H(+). It functions in the pathway purine metabolism; 7-cyano-7-deazaguanine biosynthesis. In terms of biological role, catalyzes the ATP-dependent conversion of 7-carboxy-7-deazaguanine (CDG) to 7-cyano-7-deazaguanine (preQ(0)). This chain is 7-cyano-7-deazaguanine synthase, found in Methanococcus maripaludis (strain C6 / ATCC BAA-1332).